Here is a 375-residue protein sequence, read N- to C-terminus: Alcohol dehydrogenase 6 (375 aa).

Position 23 is a phosphoserine (Ser23). 7 residues coordinate Zn(2+): Cys47, His69, Cys99, Cys102, Cys105, Cys113, and Cys175. Residues 200-205 (GLGGVG), Asp224, Lys229, 293-295 (VGL), and Arg370 each bind NAD(+).

This sequence belongs to the zinc-containing alcohol dehydrogenase family. Class-V subfamily. In terms of assembly, dimer. Requires Zn(2+) as cofactor.

The protein resides in the cytoplasm. The enzyme catalyses a primary alcohol + NAD(+) = an aldehyde + NADH + H(+). The catalysed reaction is a secondary alcohol + NAD(+) = a ketone + NADH + H(+). Alcohol dehydrogenase. Catalyzes the NAD-dependent oxidation of primary alcohols to the corresponding aldehydes. Oxidizes secondary alcohols to the corresponding ketones. In Pongo abelii (Sumatran orangutan), this protein is Alcohol dehydrogenase 6 (ADH6).